The primary structure comprises 148 residues: Large ribosomal subunit protein bL9 (148 aa).

Belongs to the bacterial ribosomal protein bL9 family.

Functionally, binds to the 23S rRNA. This is Large ribosomal subunit protein bL9 from Alkaliphilus oremlandii (strain OhILAs) (Clostridium oremlandii (strain OhILAs)).